A 21-amino-acid polypeptide reads, in one-letter code: Putative pancreatic polypeptide 2 (21 aa).

Belongs to the NPY family.

The polypeptide is Putative pancreatic polypeptide 2 (PPY2P) (Homo sapiens (Human)).